Consider the following 100-residue polypeptide: Protein MEN-8 (100 aa).

A signal peptide spans Met1–Ala33. Intrachain disulfides connect Cys38–Cys76, Cys48–Cys65, Cys66–Cys91, and Cys78–Cys98.

Belongs to the A9/FIL1 family.

The protein resides in the secreted. In Silene latifolia (White campion), this protein is Protein MEN-8 (MEN-8).